The following is a 195-amino-acid chain: UPF0215 protein TSIB_1161 (195 aa).

This sequence belongs to the UPF0215 family.

The sequence is that of UPF0215 protein TSIB_1161 from Thermococcus sibiricus (strain DSM 12597 / MM 739).